We begin with the raw amino-acid sequence, 692 residues long: Ribonuclease R (692 aa).

Positions 204–525 (RKDLRDLLCF…IVHRLLFHPL (322 aa)) constitute an RNB domain. An S1 motif domain is found at 563–648 (KKFLDEQPAT…LTQAIEWTLI (86 aa)). Positions 651-692 (KERSSSKKKKAKAKSNATQVKKKSSSKKKKAVSKAKKNRGGK) are disordered. The span at 670 to 692 (VKKKSSSKKKKAVSKAKKNRGGK) shows a compositional bias: basic residues.

This sequence belongs to the RNR ribonuclease family. RNase R subfamily.

The protein resides in the cytoplasm. The enzyme catalyses Exonucleolytic cleavage in the 3'- to 5'-direction to yield nucleoside 5'-phosphates.. Functionally, 3'-5' exoribonuclease that releases 5'-nucleoside monophosphates and is involved in maturation of structured RNAs. This Chlamydia muridarum (strain MoPn / Nigg) protein is Ribonuclease R.